The chain runs to 444 residues: Gamma-glutamyl phosphate reductase (444 aa).

It belongs to the gamma-glutamyl phosphate reductase family.

The protein resides in the cytoplasm. It carries out the reaction L-glutamate 5-semialdehyde + phosphate + NADP(+) = L-glutamyl 5-phosphate + NADPH + H(+). It participates in amino-acid biosynthesis; L-proline biosynthesis; L-glutamate 5-semialdehyde from L-glutamate: step 2/2. Its function is as follows. Catalyzes the NADPH-dependent reduction of L-glutamate 5-phosphate into L-glutamate 5-semialdehyde and phosphate. The product spontaneously undergoes cyclization to form 1-pyrroline-5-carboxylate. This Albidiferax ferrireducens (strain ATCC BAA-621 / DSM 15236 / T118) (Rhodoferax ferrireducens) protein is Gamma-glutamyl phosphate reductase.